The chain runs to 252 residues: Cyclic di-GMP binding protein VCA0042 (252 aa).

A compositionally biased stretch (basic and acidic residues) spans 1 to 11; that stretch reads MNSRPAEKIDN. Residues 1–24 are disordered; the sequence is MNSRPAEKIDNNDGQTETPRSKTV. The span at 12–24 shows a compositional bias: polar residues; it reads NDGQTETPRSKTV. Positions 134–233 constitute a PilZ domain; sequence QLRKEPRFEL…EEGRNNAKNL (100 aa).

This sequence belongs to the YcgR family. In terms of assembly, dimer.

It localises to the bacterial flagellum basal body. Functionally, may act as a flagellar brake, regulating swimming and swarming in a bis-(3'-5') cyclic diguanylic acid (c-di-GMP)-dependent manner. Increasing levels of c-di-GMP lead to decreased motility (Potential). Binds bis-(3'-5') cyclic diguanylic acid (c-di-GMP) with a dissociation constant of 170 nM in the presence of 10 mM KCl and with 100 nM in its absence. Binds 1 to 2 c-di-GMP per subunit. Only 1 c-di-GMP is seen in the wild-type crystal, while 2 are seen in the mutant. Depending on the concentration of K(+) stoichiometries of 1:1, 1.43:1 and 2:1 are determined by isothermal titration calorimetry. This Vibrio cholerae serotype O1 (strain ATCC 39315 / El Tor Inaba N16961) protein is Cyclic di-GMP binding protein VCA0042.